A 320-amino-acid polypeptide reads, in one-letter code: L-lactate dehydrogenase (320 aa).

NAD(+) is bound by residues valine 19, aspartate 40, arginine 45, and glycine 85–alanine 86. Residues glutamine 88 and arginine 94 each contribute to the substrate site. NAD(+)-binding positions include serine 107, isoleucine 124–asparagine 126, and serine 149. A substrate-binding site is contributed by asparagine 126 to aspartate 129. Aspartate 154–arginine 157 is a substrate binding site. Beta-D-fructose 1,6-bisphosphate-binding residues include arginine 159 and histidine 174. The active-site Proton acceptor is the histidine 181. Tyrosine 228 carries the post-translational modification Phosphotyrosine. Substrate is bound at residue threonine 237.

This sequence belongs to the LDH/MDH superfamily. LDH family. In terms of assembly, homotetramer.

The protein resides in the cytoplasm. The catalysed reaction is (S)-lactate + NAD(+) = pyruvate + NADH + H(+). The protein operates within fermentation; pyruvate fermentation to lactate; (S)-lactate from pyruvate: step 1/1. Allosterically activated by fructose 1,6-bisphosphate (FBP). Catalyzes the conversion of lactate to pyruvate. The polypeptide is L-lactate dehydrogenase (Bifidobacterium animalis subsp. lactis (strain AD011)).